Here is a 193-residue protein sequence, read N- to C-terminus: Large ribosomal subunit protein uL5 (193 aa).

This sequence belongs to the universal ribosomal protein uL5 family. Part of the 50S ribosomal subunit; part of the 5S rRNA/L5/L18/L25 subcomplex. Contacts the 5S rRNA and the P site tRNA. Forms a bridge to the 30S subunit in the 70S ribosome.

Functionally, this is one of the proteins that bind and probably mediate the attachment of the 5S RNA into the large ribosomal subunit, where it forms part of the central protuberance. In the 70S ribosome it contacts protein S13 of the 30S subunit (bridge B1b), connecting the 2 subunits; this bridge is implicated in subunit movement. Contacts the P site tRNA; the 5S rRNA and some of its associated proteins might help stabilize positioning of ribosome-bound tRNAs. The sequence is that of Large ribosomal subunit protein uL5 from Arthrobacter sp. (strain FB24).